Consider the following 289-residue polypeptide: Pantothenate synthetase (289 aa).

33–40 (MGNLHDGH) contacts ATP. His-40 serves as the catalytic Proton donor. Residue Gln-64 coordinates (R)-pantoate. A beta-alanine-binding site is contributed by Gln-64. 155-158 (GKKD) is an ATP binding site. Position 161 (Gln-161) interacts with (R)-pantoate. ATP-binding positions include Ala-184 and 192–195 (LSSR).

The protein belongs to the pantothenate synthetase family. As to quaternary structure, homodimer.

It localises to the cytoplasm. It carries out the reaction (R)-pantoate + beta-alanine + ATP = (R)-pantothenate + AMP + diphosphate + H(+). The protein operates within cofactor biosynthesis; (R)-pantothenate biosynthesis; (R)-pantothenate from (R)-pantoate and beta-alanine: step 1/1. Functionally, catalyzes the condensation of pantoate with beta-alanine in an ATP-dependent reaction via a pantoyl-adenylate intermediate. The sequence is that of Pantothenate synthetase from Acidovorax sp. (strain JS42).